The sequence spans 503 residues: Aspartyl/glutamyl-tRNA(Asn/Gln) amidotransferase subunit B (503 aa).

This sequence belongs to the GatB/GatE family. GatB subfamily. Heterotrimer of A, B and C subunits.

It catalyses the reaction L-glutamyl-tRNA(Gln) + L-glutamine + ATP + H2O = L-glutaminyl-tRNA(Gln) + L-glutamate + ADP + phosphate + H(+). It carries out the reaction L-aspartyl-tRNA(Asn) + L-glutamine + ATP + H2O = L-asparaginyl-tRNA(Asn) + L-glutamate + ADP + phosphate + 2 H(+). Functionally, allows the formation of correctly charged Asn-tRNA(Asn) or Gln-tRNA(Gln) through the transamidation of misacylated Asp-tRNA(Asn) or Glu-tRNA(Gln) in organisms which lack either or both of asparaginyl-tRNA or glutaminyl-tRNA synthetases. The reaction takes place in the presence of glutamine and ATP through an activated phospho-Asp-tRNA(Asn) or phospho-Glu-tRNA(Gln). This is Aspartyl/glutamyl-tRNA(Asn/Gln) amidotransferase subunit B from Nocardia farcinica (strain IFM 10152).